The chain runs to 1669 residues: Collagen alpha-1(IV) chain (1669 aa).

Positions 1-27 (MGPRLSVWLLLLPAALLLHEEHSRAAA) are cleaved as a signal peptide. Residues 28–172 (KGGCAGSGCG…LGHVPGMLLK (145 aa)) constitute a propeptide, N-terminal propeptide (7S domain). 3 disordered regions span residues 48–459 (KGER…EIGE), 504–1382 (GRDG…PKGQ), and 1404–1431 (PGQK…DGLP). N-linked (GlcNAc...) asparagine glycosylation occurs at N126. The segment at 173–1440 (GERGFPGIPG…PGSMGPPGTP (1268 aa)) is triple-helical region. Positions 196 to 214 (VGPPGFTGPPGPPGPPGPP) are enriched in pro residues. 3 positions are modified to 3-hydroxyproline: P204, P207, and P210. The span at 234–249 (QGVSGPPGVPGQAQVQ) shows a compositional bias: low complexity. 2 stretches are compositionally biased toward basic and acidic residues: residues 250 to 263 (EKGD…KGQK) and 289 to 298 (PGKDGDKGEK). Pro residues-rich tracts occupy residues 367-376 (PGQPGPPGLP), 413-424 (PGPPGSPGPPGQ), and 436-448 (PGPP…PGIP). Positions 535-545 (FDLRLKGDKGD) are enriched in basic and acidic residues. Residues 586 to 595 (GPPGGVGFPG) are compositionally biased toward gly residues. A 3-hydroxyproline mark is found at P587 and P602. A 4-hydroxyproline modification is found at P603. P605 bears the 3-hydroxyproline mark. P606 is subject to 4-hydroxyproline. Over residues 611–620 (AGPIGDKGQA) the composition is skewed to low complexity. The segment covering 621–630 (GFPGGPGSPG) has biased composition (gly residues). A 4-hydroxyproline mark is found at P623, P626, P629, and P632. P647 carries the 3-hydroxyproline modification. Positions 797-817 (GVPGIGPPGARGPPGGQGPPG) are enriched in gly residues. Low complexity-rich tracts occupy residues 856–875 (QSGL…PGFP) and 977–986 (PGKDGQAGQP). Positions 1011 to 1020 (GSVGGMGLPG) are enriched in gly residues. Residues 1086–1114 (SIGIPGMPGSPGLKGSPGSVGYPGSPGLP) are compositionally biased toward low complexity. P1214 is modified (3-hydroxyproline). Pro residues predominate over residues 1247–1258 (PGLPGPMGPPGL). Residues 1290 to 1299 (GMPGIGGSPG) are compositionally biased toward gly residues. The span at 1368–1382 (PGLKGLQGLPGPKGQ) shows a compositional bias: low complexity. The residue at position 1424 (P1424) is a 3-hydroxyproline. Positions 1445 to 1669 (GFLVTRHSQT…SRCQVCMRRT (225 aa)) constitute a Collagen IV NC1 domain. Disulfide bonds link C1460–C1551, C1493–C1548, C1505–C1511, C1570–C1665, C1604–C1662, and C1616–C1622. M1533 participates in a covalent cross-link: S-Lysyl-methionine sulfilimine (Met-Lys) (interchain with K-1651). K1651 participates in a covalent cross-link: S-Lysyl-methionine sulfilimine (Lys-Met) (interchain with M-1533).

This sequence belongs to the type IV collagen family. There are six type IV collagen isoforms, alpha 1(IV)-alpha 6(IV), each of which can form a triple helix structure with 2 other chains to generate type IV collagen network. Interacts with EFEMP2. Post-translationally, lysines at the third position of the tripeptide repeating unit (G-X-Y) are hydroxylated. The modified lysines can be O-glycosylated. Contains 4-hydroxyproline. Prolines at the third position of the tripeptide repeating unit (G-X-Y) are hydroxylated in some or all of the chains. In terms of processing, contains 3-hydroxyproline. This modification occurs on the first proline residue in the sequence motif Gly-Pro-Hyp, where Hyp is 4-hydroxyproline. Post-translationally, type IV collagens contain numerous cysteine residues which are involved in inter- and intramolecular disulfide bonding. 12 of these, located in the NC1 domain, are conserved in all known type IV collagens. The trimeric structure of the NC1 domains is stabilized by covalent bonds (sulfilimine cross-links) between Lys and Met residues. These cross-links are important for the mechanical stability of the basement membrane. Sulfilimine cross-link is catalyzed by PXDN. In terms of processing, proteolytic processing produces the C-terminal NC1 peptide, arresten. In terms of tissue distribution, highly expressed in placenta.

The protein localises to the secreted. It is found in the extracellular space. The protein resides in the extracellular matrix. Its subcellular location is the basement membrane. Functionally, type IV collagen is the major structural component of glomerular basement membranes (GBM), forming a 'chicken-wire' meshwork together with laminins, proteoglycans and entactin/nidogen. Its function is as follows. Arresten, comprising the C-terminal NC1 domain, inhibits angiogenesis and tumor formation. The C-terminal half is found to possess the anti-angiogenic activity. Specifically inhibits endothelial cell proliferation, migration and tube formation. In Homo sapiens (Human), this protein is Collagen alpha-1(IV) chain.